The chain runs to 417 residues: MKLNKLNPRWDAYDRRDSFWLQLLCLKYLGLWPPEDTDQATRNRYIAYGWALRIMFLHLYALTQALYFKDVKDINDIANALFVLMTQVTLIYKLEKFNYNIARIQACLRKLNCTLYHPKQREEFSPVLQSMSGVFWLMIFLMFVAIFTIIMWVMSPAFDNERRLPVPAWFPVDYHHSDIVYGVLFLYQTIGIVMSATYNFSTDTMFSGLMLHINGQIVRLGSMVKKLGHDVPPERQLVATDAEWKEMRKRIDHHSKVYGTMYAKVTECVLFHKDILSFGDEVQDIFQGSIFAQVCASVIIICMTLLQATGDDVTMADLLGCGFYLLVMTSQVFIFCYVGNEISYTTDKFTEFVGFSNYFKFDKRTSQAMIFFLQMTLKDVHIKVGSVLKVTLNLHTFLQIMKLSYSYLAVLQSMESE.

Residues 1–2 (MK) are Cytoplasmic-facing. The chain crosses the membrane as a helical span at residues 3 to 23 (LNKLNPRWDAYDRRDSFWLQL). The Extracellular segment spans residues 24 to 45 (LCLKYLGLWPPEDTDQATRNRY). A helical transmembrane segment spans residues 46–66 (IAYGWALRIMFLHLYALTQAL). Over 67 to 73 (YFKDVKD) the chain is Cytoplasmic. Residues 74–94 (INDIANALFVLMTQVTLIYKL) traverse the membrane as a helical segment. At 95–133 (EKFNYNIARIQACLRKLNCTLYHPKQREEFSPVLQSMSG) the chain is on the extracellular side. The N-linked (GlcNAc...) asparagine glycan is linked to N112. The chain crosses the membrane as a helical span at residues 134–154 (VFWLMIFLMFVAIFTIIMWVM). The Cytoplasmic portion of the chain corresponds to 155–178 (SPAFDNERRLPVPAWFPVDYHHSD). A helical membrane pass occupies residues 179–199 (IVYGVLFLYQTIGIVMSATYN). Residues 200-284 (FSTDTMFSGL…ILSFGDEVQD (85 aa)) lie on the Extracellular side of the membrane. Residues 285–305 (IFQGSIFAQVCASVIIICMTL) form a helical membrane-spanning segment. Residues 306–317 (LQATGDDVTMAD) lie on the Cytoplasmic side of the membrane. The chain crosses the membrane as a helical span at residues 318 to 338 (LLGCGFYLLVMTSQVFIFCYV). The Extracellular segment spans residues 339–417 (GNEISYTTDK…LAVLQSMESE (79 aa)).

It belongs to the insect chemoreceptor superfamily. Heteromeric odorant receptor channel (TC 1.A.69) family. Or2a subfamily. Female-specific antennae and maxillary palp expression.

The protein resides in the cell membrane. Functionally, odorant receptor which plays a critical role in the anthropophilic host-seeking behavior; establishes the host preference to transmit malaria. May participate in the phenomenon of decreased host-seeking behavior in disease vector mosquitoes after blood feeding. The sequence is that of Odorant receptor Or1 (OR1) from Anopheles gambiae (African malaria mosquito).